The chain runs to 182 residues: Dynactin subunit 5 (182 aa).

Met1 carries the N-acetylmethionine modification.

It belongs to the dynactin subunits 5/6 family. Dynactin subunit 5 subfamily. In terms of assembly, subunit of dynactin, a multiprotein complex part of a tripartite complex with dynein and a adapter, such as BICDL1, BICD2 or HOOK3. The dynactin complex is built around ACTR1A/ACTB filament and consists of an actin-related filament composed of a shoulder domain, a pointed end and a barbed end. Its length is defined by its flexible shoulder domain. The soulder is composed of 2 DCTN1 subunits, 4 DCTN2 and 2 DCTN3. The 4 DCNT2 (via N-terminus) bind the ACTR1A filament and act as molecular rulers to determine the length. The pointed end is important for binding dynein-dynactin cargo adapters. Consists of 4 subunits: ACTR10, DCNT4, DCTN5 and DCTN6. Within the complex DCTN6 forms a heterodimer with DCTN5. The barbed end is composed of a CAPZA1:CAPZB heterodimers, which binds ACTR1A/ACTB filament and dynactin and stabilizes dynactin. Interacts with N4BP2L1.

It is found in the cytoplasm. The protein resides in the cytoskeleton. It localises to the chromosome. Its subcellular location is the centromere. The protein localises to the kinetochore. Functionally, part of the dynactin complex that activates the molecular motor dynein for ultra-processive transport along microtubules. This chain is Dynactin subunit 5, found in Homo sapiens (Human).